We begin with the raw amino-acid sequence, 338 residues long: Solute carrier family 35 member G4 (338 aa).

The interval 1 to 29 (MAGSHPYFNLPDSTHPSPPSTPPSLHWHQ) is disordered. The next 7 helical transmembrane spans lie at 37–57 (TNGL…VGPL), 160–180 (CGLL…LWTL), 190–210 (GLGY…LLVY), 221–241 (TVAF…LFVL), 250–270 (LLSW…FTCV), 281–301 (LVCA…YFML), and 305–325 (VAPS…IITA). An EamA 1 domain is found at 49–174 (LPAGFVGPLS…SILGLIIIVG (126 aa)). An EamA 2 domain is found at 272 to 325 (YAVTKAHPALVCAVLHSEVVMALILQYFMLHETVAPSDIMGAGVVLGSIAIITA).

This sequence belongs to the SLC35G solute transporter family.

The protein resides in the membrane. This Homo sapiens (Human) protein is Solute carrier family 35 member G4 (SLC35G4).